The chain runs to 239 residues: tRNA (guanine-N(7)-)-methyltransferase (239 aa).

The S-adenosyl-L-methionine site is built by E69, E94, D121, and D144. Residue D144 is part of the active site. Residue K148 coordinates substrate. The tract at residues 150–155 is interaction with RNA; the sequence is RHNKRR. Residues D180 and 217–220 contribute to the substrate site; that span reads TKFE.

The protein belongs to the class I-like SAM-binding methyltransferase superfamily. TrmB family. As to quaternary structure, monomer.

The enzyme catalyses guanosine(46) in tRNA + S-adenosyl-L-methionine = N(7)-methylguanosine(46) in tRNA + S-adenosyl-L-homocysteine. It participates in tRNA modification; N(7)-methylguanine-tRNA biosynthesis. In terms of biological role, catalyzes the formation of N(7)-methylguanine at position 46 (m7G46) in tRNA. This chain is tRNA (guanine-N(7)-)-methyltransferase, found in Yersinia enterocolitica serotype O:8 / biotype 1B (strain NCTC 13174 / 8081).